The primary structure comprises 366 residues: 5-hydroxytryptamine receptor 1F (366 aa).

Over 1–24 (MDFLNSSDQNLTSEELLNRMPSKI) the chain is Extracellular. Asn-5 and Asn-10 each carry an N-linked (GlcNAc...) asparagine glycan. Residues 25-49 (LVSLTLSGLALMTTTINSLVIAAII) traverse the membrane as a helical segment. The Cytoplasmic portion of the chain corresponds to 50–59 (VTRKLHHPAN). Residues 60-81 (YLICSLAVTDFLVAVLVMPFSI) traverse the membrane as a helical segment. The Extracellular segment spans residues 82–96 (VYIVRESWIMGQVVC). Cys-96 and Cys-172 are disulfide-bonded. A helical transmembrane segment spans residues 97-119 (DIWLSVDITCCTCSILHLSAIAL). The serotonin site is built by Asp-103 and Cys-107. Positions 120–122 (DRY) match the DRY motif; important for ligand-induced conformation changes motif. The Cytoplasmic segment spans residues 120–139 (DRYRAITDAVEYARKRTPKH). Residues 140–159 (AGIMITIVWIISVFISMPPL) form a helical membrane-spanning segment. The Extracellular segment spans residues 160 to 178 (FWRHQGTSRDDECIIKHDH). Residues 179–202 (IVSTIYSTFGAFYIPLALILILYY) form a helical membrane-spanning segment. Topologically, residues 203 to 291 (KIYRAAKTLY…KISGTRERKA (89 aa)) are cytoplasmic. The chain crosses the membrane as a helical span at residues 292–315 (ATTLGLILGAFVICWLPFFVKELV). Residues 316-327 (VNVCDKCKISEE) are Extracellular-facing. Residues 328–350 (MSNFLAWLGYLNSLINPLIYTIF) traverse the membrane as a helical segment. The NPxxY motif; important for ligand-induced conformation changes and signaling signature appears at 343 to 347 (NPLIY). The Cytoplasmic portion of the chain corresponds to 351 to 366 (NEDFKKAFQKLVRCRC).

It belongs to the G-protein coupled receptor 1 family.

The protein localises to the cell membrane. G-protein coupled receptor for 5-hydroxytryptamine (serotonin). Also functions as a receptor for various alkaloids and psychoactive substances. Receptor for lasmiditan, a drug for the treatment of acute migraine. Ligand binding causes a conformation change that triggers signaling via guanine nucleotide-binding proteins (G proteins) and modulates the activity of downstream effectors, such as adenylate cyclase. HTR1F is coupled to G(i)/G(o) G alpha proteins and mediates inhibitory neurotransmission by inhibiting adenylate cyclase activity. This is 5-hydroxytryptamine receptor 1F from Homo sapiens (Human).